The following is a 217-amino-acid chain: U2 snRNP component ist3 (217 aa).

One can recognise an RRM domain in the interval 31-109 (AYIYIGNLDF…RLVRVDHVAS (79 aa)). 2 disordered regions span residues 119–138 (PANL…STIN) and 154–217 (EVEQ…DLDG). The segment covering 128–138 (SGSSLSVSTIN) has biased composition (polar residues). Position 160 is a phosphoserine (S160). Composition is skewed to basic and acidic residues over residues 161–176 (PKDE…DYIH) and 185–198 (HESS…DSNR). Over residues 199 to 217 (HSRHHRRHSRSRRHRDLDG) the composition is skewed to basic residues.

Belongs to the IST3 family. As to quaternary structure, belongs to the 40S cdc5-associated complex (or cwf complex), a spliceosome sub-complex reminiscent of a late-stage spliceosome composed of the U2, U5 and U6 snRNAs and at least brr2, cdc5, cwf2/prp3, cwf3/syf1, cwf4/syf3, cwf5/ecm2, spp42/cwf6, cwf7/spf27, cwf8, cwf9, cwf10, cwf11, cwf12, prp45/cwf13, cwf14, cwf15, cwf16, cwf17, cwf18, cwf19, cwf20, cwf21, cwf22, cwf23, cwf24, cwf25, cwf26, cyp7/cwf27, cwf28, cwf29/ist3, lea1, msl1, prp5/cwf1, prp10, prp12/sap130, prp17, prp22, sap61, sap62, sap114, sap145, slu7, smb1, smd1, smd3, smf1, smg1 and syf2.

The protein localises to the nucleus. In terms of biological role, required for pre-mRNA splicing and spliceosome assembly. The chain is U2 snRNP component ist3 (cwf29) from Schizosaccharomyces pombe (strain 972 / ATCC 24843) (Fission yeast).